Here is a 277-residue protein sequence, read N- to C-terminus: Formamidopyrimidine-DNA glycosylase (277 aa).

Residue Pro-2 is the Schiff-base intermediate with DNA of the active site. Residue Glu-3 is the Proton donor of the active site. The active-site Proton donor; for beta-elimination activity is the Lys-60. His-94, Arg-113, and Arg-156 together coordinate DNA. An FPG-type zinc finger spans residues Lys-241–Lys-275. Arg-265 acts as the Proton donor; for delta-elimination activity in catalysis.

It belongs to the FPG family. As to quaternary structure, monomer. It depends on Zn(2+) as a cofactor.

The catalysed reaction is Hydrolysis of DNA containing ring-opened 7-methylguanine residues, releasing 2,6-diamino-4-hydroxy-5-(N-methyl)formamidopyrimidine.. It catalyses the reaction 2'-deoxyribonucleotide-(2'-deoxyribose 5'-phosphate)-2'-deoxyribonucleotide-DNA = a 3'-end 2'-deoxyribonucleotide-(2,3-dehydro-2,3-deoxyribose 5'-phosphate)-DNA + a 5'-end 5'-phospho-2'-deoxyribonucleoside-DNA + H(+). Functionally, involved in base excision repair of DNA damaged by oxidation or by mutagenic agents. Acts as a DNA glycosylase that recognizes and removes damaged bases. Has a preference for oxidized purines, such as 7,8-dihydro-8-oxoguanine (8-oxoG). Has AP (apurinic/apyrimidinic) lyase activity and introduces nicks in the DNA strand. Cleaves the DNA backbone by beta-delta elimination to generate a single-strand break at the site of the removed base with both 3'- and 5'-phosphates. This chain is Formamidopyrimidine-DNA glycosylase, found in Desulforamulus reducens (strain ATCC BAA-1160 / DSM 100696 / MI-1) (Desulfotomaculum reducens).